Consider the following 278-residue polypeptide: NAD kinase (278 aa).

The Proton acceptor role is filled by aspartate 67. NAD(+)-binding positions include 67–68 (DG), arginine 72, 137–138 (NE), lysine 148, arginine 165, aspartate 167, 178–183 (TGYAMS), alanine 202, and glutamine 237.

Belongs to the NAD kinase family. A divalent metal cation is required as a cofactor.

It localises to the cytoplasm. It carries out the reaction NAD(+) + ATP = ADP + NADP(+) + H(+). Its function is as follows. Involved in the regulation of the intracellular balance of NAD and NADP, and is a key enzyme in the biosynthesis of NADP. Catalyzes specifically the phosphorylation on 2'-hydroxyl of the adenosine moiety of NAD to yield NADP. In Thermococcus kodakarensis (strain ATCC BAA-918 / JCM 12380 / KOD1) (Pyrococcus kodakaraensis (strain KOD1)), this protein is NAD kinase.